A 225-amino-acid chain; its full sequence is T4 protein (225 aa).

Belongs to the poxviruses B9 family.

This Rabbit fibroma virus (strain Kasza) (RFV) protein is T4 protein.